Consider the following 309-residue polypeptide: Intron-encoded DNA endonuclease ai2a (309 aa).

It belongs to the LAGLIDADG endonuclease family.

It localises to the mitochondrion. Functionally, mitochondrial DNA endonuclease involved in intron homing. Cleaves only one strand of intronless DNA sequence at the site which coincides with the I-SceII cleavage recognition site. The protein is Intron-encoded DNA endonuclease ai2a (ai2a) of Dictyostelium discoideum (Social amoeba).